A 298-amino-acid polypeptide reads, in one-letter code: Nucleotide-binding protein MAV_3359 (298 aa).

Glycine 18–glycine 25 contributes to the ATP binding site. Residue aspartate 69 to serine 72 participates in GTP binding.

Belongs to the RapZ-like family.

Its function is as follows. Displays ATPase and GTPase activities. This chain is Nucleotide-binding protein MAV_3359, found in Mycobacterium avium (strain 104).